A 196-amino-acid polypeptide reads, in one-letter code: UPF0319 protein VV0948 (196 aa).

The first 19 residues, 1–19 (MKKMMILSALALFSSSLFA), serve as a signal peptide directing secretion.

The protein belongs to the UPF0319 family.

The protein is UPF0319 protein VV0948 of Vibrio vulnificus (strain YJ016).